A 90-amino-acid chain; its full sequence is Probable oxaloacetate decarboxylase gamma chain 2 (90 aa).

Residues 10-32 traverse the membrane as a helical segment; it reads GINLLTLGMGFVFIFLIFLVYAT.

The protein belongs to the OadG family. As to quaternary structure, heterotrimer of an alpha, a beta and a gamma subunit. It depends on Na(+) as a cofactor.

The protein resides in the cell membrane. The enzyme catalyses oxaloacetate + 2 Na(+)(in) + H(+) = pyruvate + 2 Na(+)(out) + CO2. Its function is as follows. Catalyzes the decarboxylation of oxaloacetate coupled to Na(+) translocation. The chain is Probable oxaloacetate decarboxylase gamma chain 2 (oadG2) from Vibrio cholerae serotype O1 (strain ATCC 39315 / El Tor Inaba N16961).